Here is a 247-residue protein sequence, read N- to C-terminus: MAAKRVEAKDYKKAAATLVDAFFDDPVCVYLCHTTNEQQFKKLMTEMFEYIVYAHIIRGLVLEVGDFAGISLWMGPGNNMDDWYSILRSGLWRLKYKLDGEGRKRFFNEFLPILNDTKADVLKERDDHSWYLVYVGVSSKEQGKGYLRKLIEPIFNICDQEGLPIYLESSHLHNRPIYEHFGFVYQQSIYLTRDNQKVPLEIMIREPETESKAEQSAKPKAALSKTVSASIAEKVEGSLAVSSTPVC.

The 136-residue stretch at 70–205 folds into the N-acetyltransferase domain; sequence ISLWMGPGNN…QKVPLEIMIR (136 aa).

Belongs to the acetyltransferase family.

The protein resides in the endoplasmic reticulum. It is found in the golgi apparatus. It localises to the vacuole. This is an uncharacterized protein from Schizosaccharomyces pombe (strain 972 / ATCC 24843) (Fission yeast).